Reading from the N-terminus, the 199-residue chain is uncharacterized protein (199 aa).

The next 4 helical transmembrane spans lie at Cys-35–Asp-55, Phe-57–Phe-77, Leu-94–Gly-114, and Tyr-131–Ala-151.

Its subcellular location is the membrane. This is an uncharacterized protein from Caenorhabditis elegans.